A 534-amino-acid polypeptide reads, in one-letter code: Membrane-bound lytic murein transglycosylase F (534 aa).

The signal sequence occupies residues Met-1–Ala-24. The non-LT domain stretch occupies residues Cys-25–Ile-285. Positions Ala-287 to Glu-534 are LT domain. Glu-330 is a catalytic residue. The disordered stretch occupies residues Val-507–Glu-534. The span at Asn-520–Glu-534 shows a compositional bias: low complexity.

The protein in the N-terminal section; belongs to the bacterial solute-binding protein 3 family. This sequence in the C-terminal section; belongs to the transglycosylase Slt family.

It localises to the cell outer membrane. It catalyses the reaction Exolytic cleavage of the (1-&gt;4)-beta-glycosidic linkage between N-acetylmuramic acid (MurNAc) and N-acetylglucosamine (GlcNAc) residues in peptidoglycan, from either the reducing or the non-reducing ends of the peptidoglycan chains, with concomitant formation of a 1,6-anhydrobond in the MurNAc residue.. Its function is as follows. Murein-degrading enzyme that degrades murein glycan strands and insoluble, high-molecular weight murein sacculi, with the concomitant formation of a 1,6-anhydromuramoyl product. Lytic transglycosylases (LTs) play an integral role in the metabolism of the peptidoglycan (PG) sacculus. Their lytic action creates space within the PG sacculus to allow for its expansion as well as for the insertion of various structures such as secretion systems and flagella. The polypeptide is Membrane-bound lytic murein transglycosylase F (Vibrio campbellii (strain ATCC BAA-1116)).